The sequence spans 201 residues: Small ribosomal subunit protein uS4 (201 aa).

The segment at 1–38 (MARYTGPATRKSRRLGVDLVGGDQSFEKRPYPPGQHGR) is disordered. An S4 RNA-binding domain is found at 91-157 (SRLDNVVYRA…DPFVIARETA (67 aa)).

The protein belongs to the universal ribosomal protein uS4 family. As to quaternary structure, part of the 30S ribosomal subunit. Contacts protein S5. The interaction surface between S4 and S5 is involved in control of translational fidelity.

In terms of biological role, one of the primary rRNA binding proteins, it binds directly to 16S rRNA where it nucleates assembly of the body of the 30S subunit. Its function is as follows. With S5 and S12 plays an important role in translational accuracy. The protein is Small ribosomal subunit protein uS4 of Mycobacterium sp. (strain JLS).